Consider the following 107-residue polypeptide: uncharacterized protein (107 aa).

This is an uncharacterized protein from Escherichia coli (strain K12).